We begin with the raw amino-acid sequence, 89 residues long: Small ribosomal subunit protein uS15 (89 aa).

A compositionally biased stretch (basic and acidic residues) spans 1 to 20 (MSITQERKSALIAEHARGKT). Residues 1-24 (MSITQERKSALIAEHARGKTDTGS) are disordered.

The protein belongs to the universal ribosomal protein uS15 family. Part of the 30S ribosomal subunit. Forms a bridge to the 50S subunit in the 70S ribosome, contacting the 23S rRNA.

In terms of biological role, one of the primary rRNA binding proteins, it binds directly to 16S rRNA where it helps nucleate assembly of the platform of the 30S subunit by binding and bridging several RNA helices of the 16S rRNA. Its function is as follows. Forms an intersubunit bridge (bridge B4) with the 23S rRNA of the 50S subunit in the ribosome. The polypeptide is Small ribosomal subunit protein uS15 (Maricaulis maris (strain MCS10) (Caulobacter maris)).